The primary structure comprises 379 residues: tRNA(Met) cytidine acetate ligase (379 aa).

Residues 8–21, Gly-97, Asn-153, and Arg-176 each bind ATP; that span reads IAEF…HEYL.

It belongs to the TmcAL family.

It is found in the cytoplasm. The catalysed reaction is cytidine(34) in elongator tRNA(Met) + acetate + ATP = N(4)-acetylcytidine(34) in elongator tRNA(Met) + AMP + diphosphate. Catalyzes the formation of N(4)-acetylcytidine (ac(4)C) at the wobble position of elongator tRNA(Met), using acetate and ATP as substrates. First activates an acetate ion to form acetyladenylate (Ac-AMP) and then transfers the acetyl group to tRNA to form ac(4)C34. The chain is tRNA(Met) cytidine acetate ligase from Lactococcus lactis subsp. cremoris (strain MG1363).